The sequence spans 508 residues: U4/U6 small nuclear ribonucleoprotein Prp31 (508 aa).

The interval 1–45 (MSLADELLADLEEAGEEDGLYPGGEEGESDGEPGERQVDGGLEDI) is disordered. Acidic residues predominate over residues 7-32 (LLADLEEAGEEDGLYPGGEEGESDGE). 2 coiled-coil regions span residues 96–131 (EADPEYRLIVAANNLTVEIDNELNIIHKFVRDKYSK) and 192–226 (DDELQRLEEACDMALELNQSKHRIYEYVESRMSFI). In terms of domain architecture, Nop spans 226–344 (IAPNLSIIVG…IERKFDKWQE (119 aa)). Disordered regions lie at residues 345-368 (PPPVKQVKPLPAPLDGQRKKRGGR) and 442-461 (QSMTYGGKSTVRDRSSGTSS). Residues 362–375 (RKKRGGRRYRKMKE) carry the Nuclear localization signal (NLS) motif.

The protein belongs to the PRP31 family. As to quaternary structure, identified in the spliceosome B complex. Component of the U4/U6-U5 tri-snRNP complex. Component of some MLL1/MLL complex.

It localises to the nucleus. The protein resides in the nucleus speckle. Its subcellular location is the cajal body. Involved in pre-mRNA splicing as component of the spliceosome. Required for the assembly of the U4/U5/U6 tri-snRNP complex, one of the building blocks of the spliceosome. The polypeptide is U4/U6 small nuclear ribonucleoprotein Prp31 (prpf31) (Danio rerio (Zebrafish)).